The sequence spans 300 residues: Porphobilinogen deaminase (300 aa).

C239 is subject to S-(dipyrrolylmethanemethyl)cysteine.

It belongs to the HMBS family. Monomer. It depends on dipyrromethane as a cofactor.

It carries out the reaction 4 porphobilinogen + H2O = hydroxymethylbilane + 4 NH4(+). It participates in porphyrin-containing compound metabolism; protoporphyrin-IX biosynthesis; coproporphyrinogen-III from 5-aminolevulinate: step 2/4. Functionally, tetrapolymerization of the monopyrrole PBG into the hydroxymethylbilane pre-uroporphyrinogen in several discrete steps. The polypeptide is Porphobilinogen deaminase (Francisella tularensis subsp. tularensis (strain WY96-3418)).